Here is a 152-residue protein sequence, read N- to C-terminus: MDKEETIVTIVGSVLAHEGAEFVYAGKAAECESCKVAKVCHNAKLREGKRYRVVSVRKTKHDCAVHEGGAKAVEVAETIITAVIPTSQATRRTRITYTPVCDDVFCKGYAFCHPDGLTEKGRYVVLEVLGPYSECPKGTKNLKLVEMRPVPT.

It belongs to the UPF0179 family.

The sequence is that of UPF0179 protein Mlab_1307 from Methanocorpusculum labreanum (strain ATCC 43576 / DSM 4855 / Z).